Consider the following 184-residue polypeptide: Ribosome-recycling factor (184 aa).

The protein belongs to the RRF family.

It is found in the cytoplasm. In terms of biological role, responsible for the release of ribosomes from messenger RNA at the termination of protein biosynthesis. May increase the efficiency of translation by recycling ribosomes from one round of translation to another. In Mycoplasma pneumoniae (strain ATCC 29342 / M129 / Subtype 1) (Mycoplasmoides pneumoniae), this protein is Ribosome-recycling factor.